The chain runs to 168 residues: Photosystem I assembly protein Ycf3 (168 aa).

TPR repeat units follow at residues 35 to 68 (AFTYYRDGMSAQSEGNYAEALQNYYEAMRLEIDP), 72 to 105 (SYILYNIGLIHTSNGEHTKALEYYFRALERNPFL), and 120 to 153 (GEQAIQQGDSEIAEAWFDQAAEYWKQAIALTPGN).

It belongs to the Ycf3 family.

It is found in the plastid. It localises to the chloroplast thylakoid membrane. Its function is as follows. Essential for the assembly of the photosystem I (PSI) complex. May act as a chaperone-like factor to guide the assembly of the PSI subunits. The sequence is that of Photosystem I assembly protein Ycf3 from Solanum bulbocastanum (Wild potato).